A 355-amino-acid chain; its full sequence is 3-dehydroquinate synthase (355 aa).

NAD(+)-binding positions include 71-76, 105-109, 129-130, Lys-142, Lys-151, and 169-172; these read EGEASK, GVVGD, TS, and TLNT. Zn(2+) is bound by residues Glu-184, His-246, and His-263.

Belongs to the sugar phosphate cyclases superfamily. Dehydroquinate synthase family. NAD(+) is required as a cofactor. The cofactor is Co(2+). Requires Zn(2+) as cofactor.

The protein resides in the cytoplasm. The catalysed reaction is 7-phospho-2-dehydro-3-deoxy-D-arabino-heptonate = 3-dehydroquinate + phosphate. The protein operates within metabolic intermediate biosynthesis; chorismate biosynthesis; chorismate from D-erythrose 4-phosphate and phosphoenolpyruvate: step 2/7. Functionally, catalyzes the conversion of 3-deoxy-D-arabino-heptulosonate 7-phosphate (DAHP) to dehydroquinate (DHQ). In Streptococcus mutans serotype c (strain ATCC 700610 / UA159), this protein is 3-dehydroquinate synthase.